Consider the following 162-residue polypeptide: Regulator of sigma D (162 aa).

It belongs to the Rsd/AlgQ family. In terms of assembly, interacts with RpoD.

It localises to the cytoplasm. Functionally, binds RpoD and negatively regulates RpoD-mediated transcription activation by preventing the interaction between the primary sigma factor RpoD with the catalytic core of the RNA polymerase and with promoter DNA. May be involved in replacement of the RNA polymerase sigma subunit from RpoD to RpoS during the transition from exponential growth to the stationary phase. This is Regulator of sigma D from Salmonella arizonae (strain ATCC BAA-731 / CDC346-86 / RSK2980).